The chain runs to 245 residues: MKIIFNADDFGISPGAVYGILESYKKGVVKSTTLLANSPAFDLAVEVAKENPGLDIGAHLTLTFGSPLLQGLETLTDDDGRFRKNYTALENGLADVDMGEVERELTAQIKKILGAGLTISHFDTHHSIEPLIYPIQHKLAEKYGVSIRRHADVSDFGAIKTPDLFETAFYADGVSFETIKKIVQAHIGTNDVVEVMTHPAFIDETLREISSYVEPRIKEVSILTSRELQAYLGQQEVEVISFRDL.

The Mg(2+) site is built by histidine 59 and histidine 125.

Belongs to the YdjC deacetylase family. Homodimer. It depends on Mg(2+) as a cofactor.

Functionally, probably catalyzes the deacetylation of acetylated carbohydrates an important step in the degradation of oligosaccharides. The chain is Carbohydrate deacetylase from Listeria welshimeri serovar 6b (strain ATCC 35897 / DSM 20650 / CCUG 15529 / CIP 8149 / NCTC 11857 / SLCC 5334 / V8).